We begin with the raw amino-acid sequence, 98 residues long: Cell cycle protein GpsB (98 aa).

Residues 34–71 (LDLIIKDYEAFQQEIDELRQENARLKRQVEELQKRPAM) adopt a coiled-coil conformation.

This sequence belongs to the GpsB family. Forms polymers through the coiled coil domains. Interacts with PBP1, MreC and EzrA.

It localises to the cytoplasm. Divisome component that associates with the complex late in its assembly, after the Z-ring is formed, and is dependent on DivIC and PBP2B for its recruitment to the divisome. Together with EzrA, is a key component of the system that regulates PBP1 localization during cell cycle progression. Its main role could be the removal of PBP1 from the cell pole after pole maturation is completed. Also contributes to the recruitment of PBP1 to the division complex. Not essential for septum formation. This chain is Cell cycle protein GpsB, found in Geobacillus kaustophilus (strain HTA426).